Reading from the N-terminus, the 751-residue chain is MSFLISFDKSKKHPAHLQLANNLKIALALEYASKNLKPEVDNDNAAMELRNTKEPFLLFDANAILRYVMDDFEGQTSDKYQFALASLQNLLYHKELPQQHVEVLTNKAIENYLVELKEPLTTTDLILFANVYALNSSLVHSKFPELPSKVHNAVALAKKHVPRDSSSFKNIGAVKIQADLTVKPKDSEILPKPNERNILITSALPYVNNVPHLGNIIGSVLSADIFARYCKGRNYNALFICGTDEYGTATETKALEEGVTPRQLCDKYHKIHSDVYKWFQIGFDYFGRTTTDKQTEIAQHIFTKLNSNGYLEEQSMKQLYCPVHNSYLADRYVEGECPKCHYDDARGDQCDKCGALLDPFELINPRCKLDDASPEPKYSDHIFLSLDKLESQISEWVEKASEEGNWSKNSKTITQSWLKDGLKPRCITRDLVWGTPVPLEKYKDKVLYVWFDATIGYVSITSNYTKEWKQWWNNPEHVSLYQFMGKDNVPFHTVVFPGSQLGTEENWTMLHHLNTTEYLQYENGKFSKSRGVGVFGNNAQDSGISPSVWRYYLASVRPESSDSHFSWDDFVARNNSELLANLGNFVNRLIKFVNAKYNGVVPKFDPKKVSNYDGLVKDINEILSNYVKEMELGHERRGLEIAMSLSARGNQFLQENKLDNTLFSQSPEKSDAVVAVGLNIIYAVSSIITPYMPEIGEKINKMLNAPALKIDDRFHLAILEGHNINKAEYLFQRIDEKKIDEWRAKYGGQQV.

Position 2 is an N-acetylserine (Ser-2). Positions 36 to 92 are interaction with ARC1; the sequence is LKPEVDNDNAAMELRNTKEPFLLFDANAILRYVMDDFEGQTSDKYQFALASLQNLLY. Positions 205-215 match the 'HIGH' region motif; the sequence is PYVNNVPHLGN. Residue Lys-411 participates in ATP binding. A 'KMSKS' region motif is present at residues 525-529; sequence KFSKS.

Belongs to the class-I aminoacyl-tRNA synthetase family. Component of a yeast aminoacyl-tRNA synthase (aaRS) complex formed by methionyl-tRNA synthase MES1, glutamyl-tRNA synthase GUS1 and the tRNA aminoacylation cofactor ARC1 in a stoichiometric complex. Interacts (via N-ter) with ARC1 (via N-ter). Can also form a stable binary complex with ARC1 that is functional in terms of aminoacylation. ARC1 increases the affinity for cognate tRNAs due to the presence of a tRNA binding domain in the middle and C-terminal part of ARC1.

The protein localises to the cytoplasm. The catalysed reaction is tRNA(Met) + L-methionine + ATP = L-methionyl-tRNA(Met) + AMP + diphosphate. In terms of biological role, catalyzes the attachment of methionine to tRNA(Met) in a two-step reaction: methionine is first activated by ATP to form Met-AMP and then transferred to the acceptor end of tRNA(Met). This is Methionine--tRNA ligase, cytoplasmic (MES1) from Saccharomyces cerevisiae (strain ATCC 204508 / S288c) (Baker's yeast).